A 229-amino-acid chain; its full sequence is Small ribosomal subunit protein uS3 (229 aa).

Residues 38–106 form the KH type-2 domain; the sequence is IREYIENKLF…KVHINVMEVK (69 aa). Over residues 208–217 the composition is skewed to acidic residues; the sequence is PEVDENEETK. Residues 208 to 229 form a disordered region; that stretch reads PEVDENEETKEENKEKSEEKSE. The segment covering 218-229 has biased composition (basic and acidic residues); it reads EENKEKSEEKSE.

Belongs to the universal ribosomal protein uS3 family. Part of the 30S ribosomal subunit. Forms a tight complex with proteins S10 and S14.

Functionally, binds the lower part of the 30S subunit head. Binds mRNA in the 70S ribosome, positioning it for translation. In Natranaerobius thermophilus (strain ATCC BAA-1301 / DSM 18059 / JW/NM-WN-LF), this protein is Small ribosomal subunit protein uS3.